A 341-amino-acid polypeptide reads, in one-letter code: tRNA N6-adenosine threonylcarbamoyltransferase (341 aa).

Fe cation contacts are provided by His111 and His115. Substrate is bound by residues 134-138 (LVSGG), Asp167, Gly180, and Asn272. Asp300 is a binding site for Fe cation.

Belongs to the KAE1 / TsaD family. Fe(2+) serves as cofactor.

It is found in the cytoplasm. It catalyses the reaction L-threonylcarbamoyladenylate + adenosine(37) in tRNA = N(6)-L-threonylcarbamoyladenosine(37) in tRNA + AMP + H(+). Its function is as follows. Required for the formation of a threonylcarbamoyl group on adenosine at position 37 (t(6)A37) in tRNAs that read codons beginning with adenine. Is involved in the transfer of the threonylcarbamoyl moiety of threonylcarbamoyl-AMP (TC-AMP) to the N6 group of A37, together with TsaE and TsaB. TsaD likely plays a direct catalytic role in this reaction. This Edwardsiella ictaluri (strain 93-146) protein is tRNA N6-adenosine threonylcarbamoyltransferase.